Reading from the N-terminus, the 247-residue chain is 2,5-diamino-6-ribosylamino-4(3H)-pyrimidinone 5'-phosphate reductase (247 aa).

Residues T75, D79, G165, and 187–191 (GASII) contribute to the NADP(+) site.

This sequence belongs to the HTP reductase family. In terms of assembly, homodimer.

The enzyme catalyses 2,5-diamino-6-(1-D-ribitylamino)pyrimidin-4(3H)-one 5'-phosphate + NADP(+) = 2,5-diamino-6-(1-D-ribosylamino)pyrimidin-4(3H)-one 5'-phosphate + NADPH + H(+). It catalyses the reaction 2,5-diamino-6-(1-D-ribitylamino)pyrimidin-4(3H)-one 5'-phosphate + NAD(+) = 2,5-diamino-6-(1-D-ribosylamino)pyrimidin-4(3H)-one 5'-phosphate + NADH + H(+). The protein operates within cofactor biosynthesis; riboflavin biosynthesis. Functionally, catalyzes an early step in riboflavin biosynthesis, the NADPH-dependent reduction of the ribose side chain of 2,5-diamino-6-ribosylamino-4(3H)-pyrimidinone 5'-phosphate, yielding 2,5-diamino-6-ribitylamino-4(3H)-pyrimidinone 5'-phosphate. The polypeptide is 2,5-diamino-6-ribosylamino-4(3H)-pyrimidinone 5'-phosphate reductase (RIB7) (Debaryomyces hansenii (strain ATCC 36239 / CBS 767 / BCRC 21394 / JCM 1990 / NBRC 0083 / IGC 2968) (Yeast)).